The sequence spans 1980 residues: Unconventional myosin-IXb (1980 aa).

Ser-2 is subject to N-acetylserine. The region spanning 15-114 is the Ras-associating domain; sequence ATFHLHIYPQ…YYFLLQERNA (100 aa). A Myosin motor domain is found at 146–954; it reads ADFDDLCNLP…ERQALQERLH (809 aa). 239-246 contacts ATP; that stretch reads GESGSGKT. The disordered stretch occupies residues 715–736; it reads GVSSPVTRSHVEELPRGANTPS. A phosphoserine mark is found at Ser-717 and Ser-718. An actin-binding region spans residues 845 to 856; it reads KAEPFFIRCIRS. A neck or regulatory domain region spans residues 941–1045; that stretch reads LKETERQALQ…CRGHLQRRSF (105 aa). 4 consecutive IQ domains span residues 958–978, 981–1001, 1002–1024, and 1025–1054; these read LRRILLLQSWFRMVLERRHFV, KHAALTIQACWRSYRVRRTLE, RTRAAVYLQAAWRGYLQRQAYHH, and QRHSIIRLQSLCRGHLQRRSFSQMMLEKQK. Ser-1046 carries the post-translational modification Phosphoserine. Positions 1046–1980 are tail; that stretch reads SQMMLEKQKA…ERAVRGAAEE (935 aa). Disordered stretches follow at residues 1049-1281, 1302-1380, and 1394-1449; these read MLEK…HPDT, SQSL…QGDS, and DKKP…NRKV. The segment covering 1097 to 1106 has biased composition (polar residues); that stretch reads TWMNSKSPNG. Phosphoserine is present on residues Ser-1108, Ser-1115, and Ser-1177. 2 stretches are compositionally biased toward basic and acidic residues: residues 1129 to 1177 and 1186 to 1195; these read ESHE…RKAS and EDTKEPREDG. Ser-1220, Ser-1222, Ser-1229, Ser-1237, Ser-1243, and Ser-1247 each carry phosphoserine. Residues 1235–1247 are compositionally biased toward low complexity; it reads RVSPVLPSSSLES. Residues 1250–1265 show a composition bias toward basic and acidic residues; that stretch reads DEDKGENSTKVQDKPE. Phosphoserine is present on residues Ser-1266, Ser-1268, and Ser-1304. Position 1319 is a phosphothreonine (Thr-1319). Ser-1327, Ser-1329, and Ser-1337 each carry phosphoserine. Residues 1327–1344 show a composition bias toward polar residues; it reads SFSTSDVSKLSPVKTSTE. The segment at 1592–1641 adopts a Phorbol-ester/DAG-type zinc-finger fold; sequence GHVFASYQVNIPQSCEQCLSYIWLMDKALLCSVCKMTCHKKCVHKIQSYC. Residue Ser-1649 is modified to Phosphoserine. The region spanning 1663–1848 is the Rho-GAP domain; it reads DSLTSDKASV…MLIKEQMRKY (186 aa). An interaction with RHOA region spans residues 1699-1704; sequence AANRTR. A coiled-coil region spans residues 1841-1861; the sequence is IKEQMRKYKVKMEEINHLEAA. Ser-1886 is subject to Phosphoserine. The disordered stretch occupies residues 1891-1923; it reads VRTKSPRTPVVQDLEELGALPEEAAGGDEDREK. The stretch at 1918–1948 forms a coiled coil; the sequence is DEDREKEILMERIQSIKEEKEDITYRLPELD. Phosphoserine occurs at positions 1932, 1952, and 1959. The segment covering 1937–1953 has biased composition (basic and acidic residues); it reads KEDITYRLPELDPRGSD. Residues 1937 to 1980 are disordered; sequence KEDITYRLPELDPRGSDEENLDSETSASTESLLEERAVRGAAEE. Thr-1965 is subject to Phosphothreonine. The segment covering 1969–1980 has biased composition (basic and acidic residues); that stretch reads LEERAVRGAAEE.

This sequence belongs to the TRAFAC class myosin-kinesin ATPase superfamily. Myosin family. Interacts (via IQ domains) with CALM. Interacts with RHOA. Interacts (via Rho-GAP domain) with ROBO1; this inhibits the interaction with RHOA and the stimulation of RHOA GTPase activity, and thereby increases the levels of active RHOA. In terms of tissue distribution, expressed in testis, lung, thymus, brain, liver, spleen and heart muscle. Detected in lung, testis, spleen and liver, and at reduced level in different brain regions (at protein level).

Its subcellular location is the cytoplasm. It localises to the cell cortex. The protein resides in the perinuclear region. The protein localises to the cytoskeleton. Its function is as follows. Myosins are actin-based motor molecules with ATPase activity. Unconventional myosins serve in intracellular movements. Binds actin with high affinity both in the absence and presence of ATP and its mechanochemical activity is inhibited by calcium ions. Also acts as a GTPase activator for RHOA. Plays a role in the regulation of cell migration via its role as RHOA GTPase activator. This is regulated by its interaction with the SLIT2 receptor ROBO1; interaction with ROBO1 impairs interaction with RHOA and subsequent activation of RHOA GTPase activity, and thereby leads to increased levels of active, GTP-bound RHOA. The protein is Unconventional myosin-IXb (Myo9b) of Rattus norvegicus (Rat).